We begin with the raw amino-acid sequence, 544 residues long: Methionine--tRNA ligase 2 (544 aa).

Positions 10–20 (PYANGSLHLGH) match the 'HIGH' region motif. Residues C141, C144, C153, and C156 each contribute to the Zn(2+) site. The 'KMSKS' region signature appears at 329 to 333 (KLSTS). T332 provides a ligand contact to ATP.

It belongs to the class-I aminoacyl-tRNA synthetase family. MetG type 1 subfamily. In terms of assembly, monomer. The cofactor is Zn(2+).

It localises to the cytoplasm. The enzyme catalyses tRNA(Met) + L-methionine + ATP = L-methionyl-tRNA(Met) + AMP + diphosphate. Its function is as follows. Is required not only for elongation of protein synthesis but also for the initiation of all mRNA translation through initiator tRNA(fMet) aminoacylation. The protein is Methionine--tRNA ligase 2 of Bacillus cereus (strain ATCC 14579 / DSM 31 / CCUG 7414 / JCM 2152 / NBRC 15305 / NCIMB 9373 / NCTC 2599 / NRRL B-3711).